Here is a 350-residue protein sequence, read N- to C-terminus: 3-dehydroquinate synthase (350 aa).

NAD(+)-binding positions include 106–110 (GVVGD), 130–131 (TS), lysine 143, and lysine 152. Zn(2+) contacts are provided by glutamate 185, histidine 246, and histidine 263.

It belongs to the sugar phosphate cyclases superfamily. Dehydroquinate synthase family. The cofactor is Co(2+). Requires Zn(2+) as cofactor. It depends on NAD(+) as a cofactor.

It localises to the cytoplasm. It carries out the reaction 7-phospho-2-dehydro-3-deoxy-D-arabino-heptonate = 3-dehydroquinate + phosphate. It participates in metabolic intermediate biosynthesis; chorismate biosynthesis; chorismate from D-erythrose 4-phosphate and phosphoenolpyruvate: step 2/7. Its function is as follows. Catalyzes the conversion of 3-deoxy-D-arabino-heptulosonate 7-phosphate (DAHP) to dehydroquinate (DHQ). The chain is 3-dehydroquinate synthase from Clostridium perfringens (strain SM101 / Type A).